The primary structure comprises 373 residues: Dual-specificity RNA methyltransferase RlmN (373 aa).

The active-site Proton acceptor is the E94. The Radical SAM core domain maps to E100–D339. C107 and C344 are joined by a disulfide. [4Fe-4S] cluster contacts are provided by C114, C118, and C121. S-adenosyl-L-methionine-binding positions include G168 to E169, S200, S222 to H224, and N301. C344 (S-methylcysteine intermediate) is an active-site residue.

It belongs to the radical SAM superfamily. RlmN family. The cofactor is [4Fe-4S] cluster.

Its subcellular location is the cytoplasm. The enzyme catalyses adenosine(2503) in 23S rRNA + 2 reduced [2Fe-2S]-[ferredoxin] + 2 S-adenosyl-L-methionine = 2-methyladenosine(2503) in 23S rRNA + 5'-deoxyadenosine + L-methionine + 2 oxidized [2Fe-2S]-[ferredoxin] + S-adenosyl-L-homocysteine. It carries out the reaction adenosine(37) in tRNA + 2 reduced [2Fe-2S]-[ferredoxin] + 2 S-adenosyl-L-methionine = 2-methyladenosine(37) in tRNA + 5'-deoxyadenosine + L-methionine + 2 oxidized [2Fe-2S]-[ferredoxin] + S-adenosyl-L-homocysteine. Its function is as follows. Specifically methylates position 2 of adenine 2503 in 23S rRNA and position 2 of adenine 37 in tRNAs. m2A2503 modification seems to play a crucial role in the proofreading step occurring at the peptidyl transferase center and thus would serve to optimize ribosomal fidelity. The sequence is that of Dual-specificity RNA methyltransferase RlmN from Shewanella frigidimarina (strain NCIMB 400).